Reading from the N-terminus, the 113-residue chain is Putative membrane protein insertion efficiency factor (113 aa).

Belongs to the UPF0161 family.

It localises to the cell inner membrane. In terms of biological role, could be involved in insertion of integral membrane proteins into the membrane. This chain is Putative membrane protein insertion efficiency factor, found in Campylobacter jejuni subsp. doylei (strain ATCC BAA-1458 / RM4099 / 269.97).